A 318-amino-acid chain; its full sequence is DNA-directed RNA polymerase subunit alpha (318 aa).

Residues Met-1 to Asp-227 form an alpha N-terminal domain (alpha-NTD) region. The alpha C-terminal domain (alpha-CTD) stretch occupies residues His-241–Lys-318.

Belongs to the RNA polymerase alpha chain family. In terms of assembly, in plastids the minimal PEP RNA polymerase catalytic core is composed of four subunits: alpha, beta, beta', and beta''. When a (nuclear-encoded) sigma factor is associated with the core the holoenzyme is formed, which can initiate transcription.

It is found in the plastid. The protein localises to the chloroplast. The enzyme catalyses RNA(n) + a ribonucleoside 5'-triphosphate = RNA(n+1) + diphosphate. DNA-dependent RNA polymerase catalyzes the transcription of DNA into RNA using the four ribonucleoside triphosphates as substrates. In Guillardia theta (Cryptophyte), this protein is DNA-directed RNA polymerase subunit alpha.